We begin with the raw amino-acid sequence, 289 residues long: N-methyltransferase FrzE (289 aa).

It belongs to the methyltransferase superfamily.

It catalyses the reaction (1S,4S)-4-[(4-hydroxyphenyl)methyl]-2,5-diazaspiro[bicyclo[3.2.1]octane-6,1'-cyclohexan]-4'-one + S-adenosyl-L-methionine = (1S,4S)-4-[(4-hydroxyphenyl)methyl]-2-methyl-2,5-diazaspiro[bicyclo[3.2.1]octane-6,1'-cyclohexan]-4'-one + S-adenosyl-L-homocysteine + H(+). The enzyme catalyses (1S,4S)-4-[(4-methoxyphenyl)methyl]-2,5-diazaspiro[bicyclo[3.2.1]octane-6,1'-cyclohexan]-4'-one + S-adenosyl-L-methionine = (1S,4S)-4-[(4-methoxyphenyl)methyl]-2-methyl-2,5-diazaspiro[bicyclo[3.2.1]octane-6,1'-cyclohexan]-4'-one + S-adenosyl-L-homocysteine + H(+). Its pathway is secondary metabolite biosynthesis. Its function is as follows. N-methyltransferase; part of the gene cluster that mediates the biosynthesis of the alkaloid (-)-FR901483, a potent immunosuppressant that shows efficacy in animal models and a probable inhibitor of purine nucleotide biosynthesis by targeting phosphoribosylpyrophosphate amidotransferase (PPAT). Within the pathway, FrzE methylates the amine at position C10'. The biosynthesis of (-)-FR901483 starts with the condensation of two L-tyrosines to yield (S,S)-dityrosyl-piperazine. This process occurs in 3 steps with the non-canonical nonribosomal peptide synthetase FrzA catalyzing the reduction of L-tyrosine into L-tyrosinal, the spontaneous condensation of 2 L-tyrosinal units, and the subsequent reduction by the NmrA-like family domain-containing oxidoreductase FrzB. The cytochrome P450 monooxygenase FrzC then performs coupling between N10 and C1' to morph the piperazine into a 1,4-diazabicyclo[3.2.1]octane spiro-fused to a 2,5-cyclohexadienone. The dienone portion is further reduced to cyclohexanone by the flavin-dependent reductase FrzD. The methyltranserases (MTs) FrzE and FrzF are then involved in the methylation at the C10' amine and the C4 phenolic oxygen, respectively. The order of the two MTs appear to be interchangeable. Cleavage of the C9-N10' bond by the dioxygenase FrzG then leads to formation of a conjugated iminium. In addition to the oxidation of C9, an additional dehydrogenation between C7 and C8 can occur to give a likely shunt product. The next biosynthetic step is the intramolecular aldol condensation catalyzed by the newly identified aldolase FrzH to yield an aza-tricyclic product with the formation of a C9-C3' bond. The short-chain dehydrogenase/reductase FrzI then produces dephospho-(-)-FR901483 that is phosphorylated at C4'-OH into (-)-FR901483 by the phosphotransferase FrzJ. This chain is N-methyltransferase FrzE, found in Cladobotryum sp.